The chain runs to 353 residues: MINRRKTRPVYVGNVKIGDGAPIVVQSMTDTKTHDIEATLNQINRLAKAGCEIIRVAVPREEDALALQEIVKNSPIPVIGDIHFSPRIAFLSLESGIHGIRLNPGNINDKGKIKEILQECKKKNIAVRLGVNSGSLEERLLEKYGYPSAEALAESALYWSEFFESVGFTNFKVSIKGSDVLQNIKANKIFAEKTDIPLHIGITEAGPAGRGSIKSAVGIGILLYEGIGDTVRVSLTADPEEEIKVVYQILQALDLRRKGVEIVSCPTCGRIEVNLPEVVKKVEEKLEAVDKPLKVAIMGCVVNAIGEAKEADIGLACGNKSAILFKKGVPIKRVSEEEMVEELLNEIQRMDNE.

The [4Fe-4S] cluster site is built by cysteine 265, cysteine 268, cysteine 300, and glutamate 307.

It belongs to the IspG family. [4Fe-4S] cluster is required as a cofactor.

It carries out the reaction (2E)-4-hydroxy-3-methylbut-2-enyl diphosphate + oxidized [flavodoxin] + H2O + 2 H(+) = 2-C-methyl-D-erythritol 2,4-cyclic diphosphate + reduced [flavodoxin]. It functions in the pathway isoprenoid biosynthesis; isopentenyl diphosphate biosynthesis via DXP pathway; isopentenyl diphosphate from 1-deoxy-D-xylulose 5-phosphate: step 5/6. In terms of biological role, converts 2C-methyl-D-erythritol 2,4-cyclodiphosphate (ME-2,4cPP) into 1-hydroxy-2-methyl-2-(E)-butenyl 4-diphosphate. The protein is 4-hydroxy-3-methylbut-2-en-1-yl diphosphate synthase (flavodoxin) of Sulfurihydrogenibium sp. (strain YO3AOP1).